The following is a 424-amino-acid chain: Glutamyl-tRNA reductase (424 aa).

Residues 53–56 (TCNR), Ser-111, 116–118 (EPQ), and Gln-122 contribute to the substrate site. Cys-54 acts as the Nucleophile in catalysis. 191–196 (GAGEMI) contacts NADP(+).

Belongs to the glutamyl-tRNA reductase family. Homodimer.

The enzyme catalyses (S)-4-amino-5-oxopentanoate + tRNA(Glu) + NADP(+) = L-glutamyl-tRNA(Glu) + NADPH + H(+). Its pathway is porphyrin-containing compound metabolism; protoporphyrin-IX biosynthesis; 5-aminolevulinate from L-glutamyl-tRNA(Glu): step 1/2. Catalyzes the NADPH-dependent reduction of glutamyl-tRNA(Glu) to glutamate 1-semialdehyde (GSA). The chain is Glutamyl-tRNA reductase from Bordetella bronchiseptica (strain ATCC BAA-588 / NCTC 13252 / RB50) (Alcaligenes bronchisepticus).